We begin with the raw amino-acid sequence, 82 residues long: Small ribosomal subunit protein bS18 (82 aa).

The protein belongs to the bacterial ribosomal protein bS18 family. Part of the 30S ribosomal subunit. Forms a tight heterodimer with protein bS6.

Binds as a heterodimer with protein bS6 to the central domain of the 16S rRNA, where it helps stabilize the platform of the 30S subunit. This chain is Small ribosomal subunit protein bS18, found in Rhizobium rhizogenes (strain K84 / ATCC BAA-868) (Agrobacterium radiobacter).